We begin with the raw amino-acid sequence, 127 residues long: Sulfiredoxin (127 aa).

Belongs to the sulfiredoxin family. It depends on Mg(2+) as a cofactor. Post-translationally, forms a transient disulfide bond with TSA1 during the reduction of cysteine sulfinic acid (-SO2H).

It localises to the cytoplasm. It is found in the nucleus. It catalyses the reaction S-hydroxy-S-oxy-L-cysteinyl-[peroxiredoxin] + [protein]-dithiol + ATP = S-hydroxy-L-cysteinyl-[peroxiredoxin] + [protein]-disulfide + ADP + phosphate. Its function is as follows. Contributes to oxidative stress resistance by reducing cysteine-sulfinic acid formed under exposure to oxidants in the peroxiredoxin TSA1. May catalyze the reduction in a multi-step process by acting both as a specific phosphotransferase and as thioltransferase. The polypeptide is Sulfiredoxin (Saccharomyces cerevisiae (strain ATCC 204508 / S288c) (Baker's yeast)).